The sequence spans 1109 residues: MARRGKKPVVRTLEDLTLDSGYGGAADSVRSSNLSLCCSDSHPASPYGGSCWPPLADSMHSRHNSFDTVNTALVEDSEGLDCAGQHCSRLLPDLDEVPWTLQELELLLLRSRDPRAGPAVPGSLPKDALAKLSMLVSRALVRIAKEAQRLSLRFAKCTKYEIQSAMEIVLSWGLAAHCTAAALAALSLYNMSSAGGDRLGRGKSARCGLTFSVGRVYRWMVDSRVALRIHEHAAIYLTACMESLFRDIYSRVLASGLPRSCSGPGPGSSSGSGPGPGSGPGAPAADKERETPGGGAASGGPCSAASSASGGSSCCAPPATAATAVPPTTATAAVAANHHHHHHTLHEAPKFTVETLEHTVNNDSEIWGLLQPYQHLICGKNASGVLSLPESLNLHRDPQRPSKPGELPMFSQSELRTIEQSLLATRVGSIAELSDLVSRAMHHLQPLNAKHHGNGTPMHHKQGALYWEPEALYTLCYFMHCPQMEWENPNVEPSKVNLQVERPFLVLPPLMEWIRVAVAHAGHRRSFSMDSDDVRQAARLLLPGVDCEPRQLKADDCFCASRKLDAVAIEAKFKQDLGFRMLNCGRTDLVKQAVSLLGPDGINTMSEQGMTPLMYACVRGDEAMVQMLLDAGADLNVEVVSTPHKYPSVHPETRHWTALTFAVLHGHIPVVQLLLDAGAKVEGSVEHGEENYSETPLQLAAAVGNFELVSLLLERGADPLIGTMYRNGISTTPQGDMNSFSQAAAHGHRNVFRKLLAQPEKEKSDILSLEEILAEGTDLAETAPPPLCASRNSKAKLRALREAMYHSAEHGYVDVTIDIRSIGVPWTLHTWLESLRIAFQQHRRPLIQCLLKEFKTIQEEEYTEELVTQGLPLMFEILKASKNEVISQQLCVIFTHCYGPYPIPKLTEIKRKQTSRLDPHFLNNKEMSDVTFLVEGRPFYAHKVLLFTASPRFKALLSSKPTNDNTCIEIGYVKYPIFQLVMQYLYYGGPESLLIKNNEIMELLSAAKFFQLEALQRHCEIICAKSINTDNCVDIYSHAKFLGVTELSAYCEGYFLKNMMVLIENEAFKQLLYDKNGEGAGQDVLQDLQRTLAIRIQSIHLSSSKGSVV.

Residues 168-188 traverse the membrane as a helical segment; sequence IVLSWGLAAHCTAAALAALSL. A disordered region spans residues 260 to 302; it reads SCSGPGPGSSSGSGPGPGSGPGAPAADKERETPGGGAASGGPC. Over residues 264–280 the composition is skewed to gly residues; that stretch reads PGPGSSSGSGPGPGSGP. ANK repeat units follow at residues 608–637, 654–683, 692–721, 735–764, and 830–859; these read QGMT…DLNV, RHWT…KVEG, YSET…DPLI, GDMN…KEKS, and TWLE…TIQE. The BTB domain occupies 928–994; sequence SDVTFLVEGR…LYYGGPESLL (67 aa).

Its subcellular location is the membrane. The polypeptide is Ankyrin repeat- and BTB/POZ domain-containing protein 3 (Abtb3) (Mus musculus (Mouse)).